The following is a 504-amino-acid chain: UDP-N-acetylmuramoylalanine--D-glutamate ligase (504 aa).

132–138 (GTNGKTT) lines the ATP pocket. Residues 286–295 (DRDASDEPAP) are compositionally biased toward basic and acidic residues. Residues 286-305 (DRDASDEPAPKRRRKNEVAT) form a disordered region.

It belongs to the MurCDEF family.

It is found in the cytoplasm. The enzyme catalyses UDP-N-acetyl-alpha-D-muramoyl-L-alanine + D-glutamate + ATP = UDP-N-acetyl-alpha-D-muramoyl-L-alanyl-D-glutamate + ADP + phosphate + H(+). The protein operates within cell wall biogenesis; peptidoglycan biosynthesis. Its function is as follows. Cell wall formation. Catalyzes the addition of glutamate to the nucleotide precursor UDP-N-acetylmuramoyl-L-alanine (UMA). This Paraburkholderia xenovorans (strain LB400) protein is UDP-N-acetylmuramoylalanine--D-glutamate ligase.